A 231-amino-acid chain; its full sequence is 5'-methylthioadenosine/S-adenosylhomocysteine nucleosidase (231 aa).

E12 acts as the Proton acceptor in catalysis. Substrate contacts are provided by residues G78, M153, and 174–175 (ME). D198 serves as the catalytic Proton donor.

This sequence belongs to the PNP/UDP phosphorylase family. MtnN subfamily.

The enzyme catalyses S-adenosyl-L-homocysteine + H2O = S-(5-deoxy-D-ribos-5-yl)-L-homocysteine + adenine. It carries out the reaction S-methyl-5'-thioadenosine + H2O = 5-(methylsulfanyl)-D-ribose + adenine. It catalyses the reaction 5'-deoxyadenosine + H2O = 5-deoxy-D-ribose + adenine. It participates in amino-acid biosynthesis; L-methionine biosynthesis via salvage pathway; S-methyl-5-thio-alpha-D-ribose 1-phosphate from S-methyl-5'-thioadenosine (hydrolase route): step 1/2. In terms of biological role, catalyzes the irreversible cleavage of the glycosidic bond in both 5'-methylthioadenosine (MTA) and S-adenosylhomocysteine (SAH/AdoHcy) to adenine and the corresponding thioribose, 5'-methylthioribose and S-ribosylhomocysteine, respectively. Also cleaves 5'-deoxyadenosine, a toxic by-product of radical S-adenosylmethionine (SAM) enzymes, into 5-deoxyribose and adenine. In Bacillus cereus (strain B4264), this protein is 5'-methylthioadenosine/S-adenosylhomocysteine nucleosidase.